Here is an 876-residue protein sequence, read N- to C-terminus: Radial spoke head 10 homolog B (876 aa).

Basic and acidic residues-rich tracts occupy residues 1 to 16 and 57 to 66; these read MVKEKKKADKKGDKSA and PKRDSEHTYQ. Positions 1–72 are disordered; that stretch reads MVKEKKKADK…HTYQSEDETQ (72 aa). MORN repeat units follow at residues 86–108, 109–131, 132–154, 155–177, 179–201, 204–226, 227–249, 251–273, 284–306, and 307–329; these read YEGEKVRGLYEGEGFAVFQGGNT, YHGMFSEGLMHGQGTYIWADGLK, YEGDFVKNIPMNHGVYTWPDGST, YEGEVVNGMRNGFGMFKCGTQPV, YIGHWCHGKRHGKGSIYYNQEGT, YEGDWVYNIKKGWGIRCYKSGNI, YEGQWENNMRHGEGRMRWLTTNE, YTGHWEKGIQNGFGTHTWFLKRI, YIGAFVNGFRHGQGKFYYASGAM, and YEGEWVSNKKQGRGRITFKNGRV. 2 disordered regions span residues 360–386 and 841–876; these read SQRSRQARGSSVSADREPETLRKLDGS and EPPEVPAVQPLTPSPPKEDLVSMQTSKASPGKKKKK. Positions 373-386 are enriched in basic and acidic residues; the sequence is ADREPETLRKLDGS. The stretch at 752-841 forms a coiled coil; it reads EKYEKSKDEQ…FELDITVLKE (90 aa).

Interacts with RSPH6A. Does not appear to be part of the axonemal radial spoke complexes 1 or 2.

It localises to the cytoplasm. The protein resides in the cytoskeleton. It is found in the cilium axoneme. Its subcellular location is the cell projection. The protein localises to the cilium. It localises to the flagellum. In terms of biological role, may function as part of the axonemal radial spoke complex 3 (RS3). Radial spoke complexes are important for ciliary motility. This chain is Radial spoke head 10 homolog B (Rsph10b), found in Rattus norvegicus (Rat).